Reading from the N-terminus, the 264-residue chain is Ribosomal RNA small subunit methyltransferase A (264 aa).

The S-adenosyl-L-methionine site is built by Asn12, Leu14, Gly40, Glu61, Asp86, and Asn105.

It belongs to the class I-like SAM-binding methyltransferase superfamily. rRNA adenine N(6)-methyltransferase family. RsmA subfamily.

The protein resides in the cytoplasm. The enzyme catalyses adenosine(1518)/adenosine(1519) in 16S rRNA + 4 S-adenosyl-L-methionine = N(6)-dimethyladenosine(1518)/N(6)-dimethyladenosine(1519) in 16S rRNA + 4 S-adenosyl-L-homocysteine + 4 H(+). In terms of biological role, specifically dimethylates two adjacent adenosines (A1518 and A1519) in the loop of a conserved hairpin near the 3'-end of 16S rRNA in the 30S particle. May play a critical role in biogenesis of 30S subunits. This chain is Ribosomal RNA small subunit methyltransferase A, found in Fusobacterium nucleatum subsp. nucleatum (strain ATCC 25586 / DSM 15643 / BCRC 10681 / CIP 101130 / JCM 8532 / KCTC 2640 / LMG 13131 / VPI 4355).